A 506-amino-acid polypeptide reads, in one-letter code: Histidine--tRNA ligase, mitochondrial (506 aa).

The transit peptide at 1–33 (MPLLGLLPRRAWASLLSQLLRPPCASCTGAVRC) directs the protein to the mitochondrion. At S67 the chain carries Phosphoserine. L-histidine contacts are provided by residues 131–133 (DLT), R158, Q174, D178, R327, and 331–332 (YY). K444 carries the N6-acetyllysine modification.

This sequence belongs to the class-II aminoacyl-tRNA synthetase family. As to quaternary structure, homodimer. As to expression, a high level expression is seen in the heart, kidney and skeletal muscle while a lower level expression is seen in the brain and liver.

It localises to the mitochondrion. The catalysed reaction is tRNA(His) + L-histidine + ATP = L-histidyl-tRNA(His) + AMP + diphosphate + H(+). Its function is as follows. Mitochondrial aminoacyl-tRNA synthetase that catalyzes the ATP-dependent ligation of histidine to the 3'-end of its cognate tRNA, via the formation of an aminoacyl-adenylate intermediate (His-AMP). The polypeptide is Histidine--tRNA ligase, mitochondrial (HARS2) (Homo sapiens (Human)).